We begin with the raw amino-acid sequence, 192 residues long: Phosphoheptose isomerase (192 aa).

Residues 35–192 (LIETLENQGK…CIERHFAHKN (158 aa)) form the SIS domain. Residue 50–52 (NGG) coordinates substrate. Zn(2+) contacts are provided by His59 and Glu63. Substrate-binding positions include Glu63, 92–93 (ND), 118–120 (STS), Ser123, and Gln170. Positions 170 and 178 each coordinate Zn(2+).

Belongs to the SIS family. GmhA subfamily. In terms of assembly, homotetramer. Zn(2+) is required as a cofactor.

It localises to the cytoplasm. The catalysed reaction is 2 D-sedoheptulose 7-phosphate = D-glycero-alpha-D-manno-heptose 7-phosphate + D-glycero-beta-D-manno-heptose 7-phosphate. It participates in carbohydrate biosynthesis; D-glycero-D-manno-heptose 7-phosphate biosynthesis; D-glycero-alpha-D-manno-heptose 7-phosphate and D-glycero-beta-D-manno-heptose 7-phosphate from sedoheptulose 7-phosphate: step 1/1. Catalyzes the isomerization of sedoheptulose 7-phosphate in D-glycero-D-manno-heptose 7-phosphate. The sequence is that of Phosphoheptose isomerase from Helicobacter pylori (strain P12).